The primary structure comprises 93 residues: uncharacterized protein (93 aa).

Its subcellular location is the plastid. It localises to the chloroplast. This is an uncharacterized protein from Diacronema lutheri (Unicellular marine alga).